The chain runs to 334 residues: Phenylalanine--tRNA ligase alpha subunit (334 aa).

Mg(2+) is bound at residue E249.

This sequence belongs to the class-II aminoacyl-tRNA synthetase family. Phe-tRNA synthetase alpha subunit type 1 subfamily. As to quaternary structure, tetramer of two alpha and two beta subunits. Mg(2+) is required as a cofactor.

The protein localises to the cytoplasm. It carries out the reaction tRNA(Phe) + L-phenylalanine + ATP = L-phenylalanyl-tRNA(Phe) + AMP + diphosphate + H(+). The sequence is that of Phenylalanine--tRNA ligase alpha subunit from Desulfosudis oleivorans (strain DSM 6200 / JCM 39069 / Hxd3) (Desulfococcus oleovorans).